The sequence spans 223 residues: Ribose-5-phosphate isomerase A (223 aa).

Residues 32 to 35, 83 to 86, and 96 to 99 each bind substrate; these read TGST, DGAD, and KGGG. Residue E105 is the Proton acceptor of the active site. Residue K123 participates in substrate binding.

Belongs to the ribose 5-phosphate isomerase family. In terms of assembly, homodimer.

The enzyme catalyses aldehydo-D-ribose 5-phosphate = D-ribulose 5-phosphate. It functions in the pathway carbohydrate degradation; pentose phosphate pathway; D-ribose 5-phosphate from D-ribulose 5-phosphate (non-oxidative stage): step 1/1. Catalyzes the reversible conversion of ribose-5-phosphate to ribulose 5-phosphate. The polypeptide is Ribose-5-phosphate isomerase A (Acinetobacter baumannii (strain ATCC 17978 / DSM 105126 / CIP 53.77 / LMG 1025 / NCDC KC755 / 5377)).